We begin with the raw amino-acid sequence, 140 residues long: ATP synthase epsilon chain (140 aa).

The protein belongs to the ATPase epsilon chain family. In terms of assembly, F-type ATPases have 2 components, CF(1) - the catalytic core - and CF(0) - the membrane proton channel. CF(1) has five subunits: alpha(3), beta(3), gamma(1), delta(1), epsilon(1). CF(0) has three main subunits: a, b and c.

Its subcellular location is the cell inner membrane. Functionally, produces ATP from ADP in the presence of a proton gradient across the membrane. The polypeptide is ATP synthase epsilon chain (Marinobacter nauticus (strain ATCC 700491 / DSM 11845 / VT8) (Marinobacter aquaeolei)).